Consider the following 438-residue polypeptide: Enolase (438 aa).

Q174 serves as a coordination point for (2R)-2-phosphoglycerate. E216 acts as the Proton donor in catalysis. D253, E297, and D324 together coordinate Mg(2+). Residues K349, R378, S379, and K400 each coordinate (2R)-2-phosphoglycerate. K349 (proton acceptor) is an active-site residue.

The protein belongs to the enolase family. As to quaternary structure, component of the RNA degradosome, a multiprotein complex involved in RNA processing and mRNA degradation. Mg(2+) serves as cofactor.

It localises to the cytoplasm. The protein resides in the secreted. The protein localises to the cell surface. The enzyme catalyses (2R)-2-phosphoglycerate = phosphoenolpyruvate + H2O. Its pathway is carbohydrate degradation; glycolysis; pyruvate from D-glyceraldehyde 3-phosphate: step 4/5. Functionally, catalyzes the reversible conversion of 2-phosphoglycerate (2-PG) into phosphoenolpyruvate (PEP). It is essential for the degradation of carbohydrates via glycolysis. The sequence is that of Enolase from Psychrobacter arcticus (strain DSM 17307 / VKM B-2377 / 273-4).